A 347-amino-acid polypeptide reads, in one-letter code: Extracellular exo-alpha-(1-&gt;5)-L-arabinofuranosidase ArbA (347 aa).

The N-terminal stretch at 1 to 31 (MPTHHPITRQHWHHSWLSALALLCASLACGA) is a signal peptide. Residue Asp35 coordinates substrate. The Proton acceptor role is filled by Asp38. Residues 90-92 (DGH), 115-116 (GK), Asn155, Ser175, and Glu221 each bind substrate. Glu221 serves as the catalytic Proton donor. A Ca(2+)-binding site is contributed by His291. Gln316 provides a ligand contact to substrate.

Belongs to the glycosyl hydrolase 43 family. As to quaternary structure, homodimer.

The protein resides in the secreted. It catalyses the reaction Hydrolysis of terminal non-reducing alpha-L-arabinofuranoside residues in alpha-L-arabinosides.. The protein operates within glycan metabolism; L-arabinan degradation. Involved in the degradation of arabinan and is a key enzyme in the complete degradation of the plant cell wall. Catalyzes the cleavage of the terminal alpha-(1-&gt;5)-arabinofuranosyl bonds of linear arabinan and carboxymethylarabinan to produce almost exclusively arabinotriose. The polypeptide is Extracellular exo-alpha-(1-&gt;5)-L-arabinofuranosidase ArbA (arbA) (Cellvibrio japonicus (strain Ueda107) (Pseudomonas fluorescens subsp. cellulosa)).